The chain runs to 301 residues: MADQLRTLPKNAKVIYEHCLKQIPNSLSQQDLVEAIGASISVNDLSSALNILLSRRLLDPLRQGNVLVYRAVRLDEAKTVSTMEGDEQIVYSFIKNSGNEGIWRKTLTLRTNLHVSVVDRCLKSLESKNLVKSIKSVKNPTRKIYMLYDLVPSTELTGGPWFTDQELDVEFIENLKKVIYRYVHSKSFPPKKAAMGPDLVWGPEYNGYPTALQIHNWLRSTNITKVDLSLANVISLVDVLIYDGKVEKRSDGASYRAIRVNNENIDAFTESPCGNCPVSDICDANSRVNPITCEYLDKWLN.

This sequence belongs to the eukaryotic RPC34/RPC39 RNA polymerase subunit family. As to quaternary structure, component of the RNA polymerase III (Pol III) complex consisting of 17 subunits. Interacts with TFIIB.

Its subcellular location is the nucleus. DNA-dependent RNA polymerase catalyzes the transcription of DNA into RNA using the four ribonucleoside triphosphates as substrates. Specific peripheric component of RNA polymerase III which synthesizes small RNAs, such as 5S rRNA and tRNAs. The protein is Probable DNA-directed RNA polymerase III subunit rpc6 (rpc6) of Schizosaccharomyces pombe (strain 972 / ATCC 24843) (Fission yeast).